The sequence spans 439 residues: Synaptotagmin-B (439 aa).

Residues 1 to 74 (MQAEMNQSAE…KEKFMNELQK (74 aa)) lie on the Vesicular side of the membrane. N-linked (GlcNAc...) asparagine glycans are attached at residues N6 and N46. Residues 75–101 (IPLPPWALIAIAIVSGLLLLTCCLCIC) traverse the membrane as a helical segment. Topologically, residues 102 to 439 (KKCCCKKKKN…EVDVALGLKK (338 aa)) are cytoplasmic. The segment at 113-155 (KEKGKGKKNDINMKDVKGSGGNQDDDDAETGLTEGEDKEEEAK) is disordered. The segment covering 119-129 (KKNDINMKDVK) has biased composition (basic and acidic residues). The segment covering 135-151 (QDDDDAETGLTEGEDKE) has biased composition (acidic residues). A phospholipid binding region spans residues 153 to 399 (EAKEEEKLGK…AIGKIFVGSN (247 aa)). 2 consecutive C2 domains span residues 159–278 (KLGK…EEWR) and 290–423 (KLGD…AQWH). L189, D190, D196, D248, F249, D250, S253, K254, D256, D321, D327, D381, D383, and D389 together coordinate Ca(2+).

Belongs to the synaptotagmin family. In terms of assembly, homodimer or homotrimer (possible). The cofactor is Ca(2+). In terms of tissue distribution, spinal cord, brainstem, midbrain and electric organ.

The protein resides in the cytoplasmic vesicle. It is found in the secretory vesicle. The protein localises to the synaptic vesicle membrane. It localises to the synapse. Its function is as follows. May have a regulatory role in the membrane interactions during trafficking of synaptic vesicles at the active zone of the synapse. It binds acidic phospholipids with a specificity that requires the presence of both an acidic head group and a diacyl backbone. The polypeptide is Synaptotagmin-B (P65-B) (Diplobatis ommata (Ocellated electric ray)).